Consider the following 407-residue polypeptide: Tryptophan synthase beta chain (407 aa).

An N6-(pyridoxal phosphate)lysine modification is found at Lys86.

This sequence belongs to the TrpB family. Tetramer of two alpha and two beta chains. Pyridoxal 5'-phosphate serves as cofactor.

The enzyme catalyses (1S,2R)-1-C-(indol-3-yl)glycerol 3-phosphate + L-serine = D-glyceraldehyde 3-phosphate + L-tryptophan + H2O. Its pathway is amino-acid biosynthesis; L-tryptophan biosynthesis; L-tryptophan from chorismate: step 5/5. Its function is as follows. The beta subunit is responsible for the synthesis of L-tryptophan from indole and L-serine. The sequence is that of Tryptophan synthase beta chain from Shewanella woodyi (strain ATCC 51908 / MS32).